Here is a 267-residue protein sequence, read N- to C-terminus: 2-keto-3-deoxy-L-rhamnonate aldolase (267 aa).

Catalysis depends on histidine 49, which acts as the Proton acceptor. A substrate-binding site is contributed by glutamine 151. Glutamate 153 lines the Mg(2+) pocket. Alanine 178 and aspartate 179 together coordinate substrate. Aspartate 179 is a binding site for Mg(2+).

It belongs to the HpcH/HpaI aldolase family. KDR aldolase subfamily. In terms of assembly, homohexamer. The cofactor is Mg(2+).

It catalyses the reaction 2-dehydro-3-deoxy-L-rhamnonate = (S)-lactaldehyde + pyruvate. Functionally, catalyzes the reversible retro-aldol cleavage of 2-keto-3-deoxy-L-rhamnonate (KDR) to pyruvate and lactaldehyde. In Escherichia coli O6:K15:H31 (strain 536 / UPEC), this protein is 2-keto-3-deoxy-L-rhamnonate aldolase.